Reading from the N-terminus, the 418-residue chain is F-box protein At1g10780 (418 aa).

The region spanning 1–47 (MDSLPDAILQYILSYLTSARDVAACNCVSKRWKESTDSVKSVVFHRN) is the F-box domain.

The sequence is that of F-box protein At1g10780 from Arabidopsis thaliana (Mouse-ear cress).